The sequence spans 309 residues: MTVFQLDDFLAGWIGGASSVIVGHPLDTVKTRLQAGKGYKNTFHCVVTIYKKENVIGFFKGLSFPLASITLYNSMVFGFFSNTQRLISKYRYGDGRHPCSMLDLTVASMLTGLVSVGVGAPVDLVKIRLQMQTQPVLAENFNLAGNGSVPLRSMGIQSQSFYRGPLHCISTVLQNEGIQGLYRGAGAMILRDIPGYALYFIPYTLFCNWLNPDDNSSPPPCCIWLAGGLAGSISWVTATPSDVVKSRLQADAMHQRKYKGILHCIMQSYRTEGIHVFFRGATVNAIRGFPMCATMFLGYELSLQFFRSF.

3 Solcar repeats span residues 3–86 (VFQL…TQRL), 99–209 (CSML…FCNW), and 218–305 (PPPC…SLQF). 6 helical membrane-spanning segments follow: residues 9-29 (FLAGWIGGASSVIVGHPLDTV), 61-81 (GLSFPLASITLYNSMVFGFFS), 105-125 (TVASMLTGLVSVGVGAPVDLV), 186-206 (GAMILRDIPGYALYFIPYTLF), 218-238 (PPPCCIWLAGGLAGSISWVTA), and 281-299 (ATVNAIRGFPMCATMFLGY).

Belongs to the mitochondrial carrier (TC 2.A.29) family.

Its subcellular location is the mitochondrion inner membrane. The polypeptide is Solute carrier family 25 member 48 (slc25a48) (Danio rerio (Zebrafish)).